Here is a 955-residue protein sequence, read N- to C-terminus: MAM domain-containing glycosylphosphatidylinositol anchor protein 1 (955 aa).

An N-terminal signal peptide occupies residues 1 to 18 (MEVTCLLLLALIPFHCRG). Ig-like domains are found at residues 24 to 123 (PAQA…KSIR) and 132 to 230 (PMLT…KAIT). N-linked (GlcNAc...) asparagine glycans are attached at residues asparagine 42 and asparagine 90. Intrachain disulfides connect cysteine 60/cysteine 108 and cysteine 157/cysteine 214. N-linked (GlcNAc...) asparagine glycosylation is found at asparagine 235, asparagine 247, asparagine 257, asparagine 307, and asparagine 331. Residues 240–323 (PALKLSVNET…VGNPAKKTVN (84 aa)) enclose the Ig-like 3 domain. Cysteine 262 and cysteine 308 form a disulfide bridge. 3 consecutive Ig-like domains span residues 338–432 (PDVI…VEVN), 440–532 (PTIS…AQVQ), and 539–631 (PEVE…FQVS). A disulfide bridge links cysteine 357 with cysteine 415. An N-linked (GlcNAc...) asparagine glycan is attached at asparagine 432. 2 disulfide bridges follow: cysteine 463–cysteine 514 and cysteine 560–cysteine 615. Residues 643-743 (TPNPTRSHKL…SRIIHYTEPI (101 aa)) form the Fibronectin type-III domain. 2 N-linked (GlcNAc...) asparagine glycosylation sites follow: asparagine 655 and asparagine 747. The MAM domain maps to 751-918 (NTCHFEDEKI…VTLKKGECPR (168 aa)). Over residues 779–788 (LTQNPKRSPN) the composition is skewed to polar residues. The interval 779–798 (LTQNPKRSPNTGPPTDISGT) is disordered. An N-linked (GlcNAc...) asparagine glycan is attached at asparagine 826. Serine 932 is lipidated: GPI-anchor amidated serine. A propeptide spans 933 to 955 (GAPCQSSPQLWGPMAIFLLALQR) (removed in mature form).

Interacts heterophilically through its MAM domain with proteins in axon-rich regions and through its Ig-like domains with proteins in differentiating muscle. Interacts (through the Ig-like domains) with NLGN2. As to expression, has been found in brain, heart, skeletal muscle and kidney. Found to be overexpressed in tumor tissues.

It localises to the cell membrane. In terms of biological role, required for radial migration of cortical neurons in the superficial layer of the neocortex. Plays a role in the formation or maintenance of inhibitory synapses. May function by inhibiting the activity of NLGN2. This is MAM domain-containing glycosylphosphatidylinositol anchor protein 1 (MDGA1) from Homo sapiens (Human).